Consider the following 587-residue polypeptide: Succinate dehydrogenase flavoprotein subunit (587 aa).

Residues 15-20 (GAGGAG), 39-54 (SKVF…AQGG), and Asp-223 contribute to the FAD site. His-47 carries the post-translational modification Tele-8alpha-FAD histidine. Residues His-244 and Thr-256 each coordinate substrate. Arg-288 acts as the Proton acceptor in catalysis. His-355 provides a ligand contact to substrate. Glu-389 is a binding site for FAD. Arg-400 contacts substrate. 405–406 (SL) lines the FAD pocket.

This sequence belongs to the FAD-dependent oxidoreductase 2 family. FRD/SDH subfamily. In terms of assembly, part of an enzyme complex containing four subunits: a flavoprotein, an iron-sulfur protein, cytochrome b-556 and a hydrophobic protein. It depends on FAD as a cofactor.

It is found in the cell inner membrane. It catalyses the reaction a quinone + succinate = fumarate + a quinol. Its pathway is carbohydrate metabolism; tricarboxylic acid cycle; fumarate from succinate (bacterial route): step 1/1. The protein is Succinate dehydrogenase flavoprotein subunit (sdhA) of Coxiella burnetii (strain RSA 493 / Nine Mile phase I).